We begin with the raw amino-acid sequence, 251 residues long: Fibroblast growth factor 23 (251 aa).

A signal peptide spans 1-24 (MLGACLRLLVGALCTVCSLGTARA). C95 and C113 are oxidised to a cystine. O-linked (GalNAc) threonine glycans are attached at residues T171 and T178. Positions 175–251 (RRHTRSAEDP…DRCRPFPRFV (77 aa)) are disordered. Residues 179–189 (RSAEDPPERDP) show a composition bias toward basic and acidic residues. S180 is modified (phosphoserine; by FAM20C).

It belongs to the heparin-binding growth factors family. As to quaternary structure, interacts with FGFR1, FGFR2, FGFR3 and FGFR4. Affinity between fibroblast growth factors (FGFs) and their receptors is increased by KL and heparan sulfate glycosaminoglycans that function as coreceptors. Following secretion this protein is inactivated by cleavage into a N-terminal fragment and a C-terminal fragment. The processing is effected by proprotein convertases. In terms of processing, O-glycosylated at Thr-171 and Thr-178 by GALNT3 and glycosylation of Thr-178 requires previous glycosylation at Thr171. Glycosylation is necessary for secretion; it blocks processing by proprotein convertases when the O-glycan is alpha 2,6-sialylated. Competition between proprotein convertase cleavage and block of cleavage by O-glycosylation determines the level of secreted active FGF23. Post-translationally, phosphorylation at Ser-180 mediated by FAM20C slows down glycosylation at Thr-178 notably. As to expression, expressed in the parathyroid.

It is found in the secreted. Its function is as follows. Regulator of phosphate homeostasis. Inhibits renal tubular phosphate transport by reducing SLC34A1 levels. Regulator of vitamin-D metabolism. Negatively regulates osteoblasts differentiation and matrix mineralization. Acts directly on the parathyroid to decrease PTH secretion. Up-regulates EGR1 expression in the presence of KL. The protein is Fibroblast growth factor 23 (Fgf23) of Rattus norvegicus (Rat).